We begin with the raw amino-acid sequence, 483 residues long: PRAME family member 12 (483 aa).

One copy of the LRR 1; degenerate repeat lies at 97-122 (RWKLQVLDLRNVDENFWGIWSGASAL). The stretch at 177-201 (HVCCKELQIFGIAIHRIIEVLNTVE) is one LRR 2; degenerate repeat. The LRR 3; degenerate repeat unit spans residues 202–228 (LDCIQEVEVCCPWELSILIRFAPYLGQ). Residues 229–264 (MRNLRKLVLFNIHVSACIPLDRKEQFVIQFTSQFLK) form an LRR 4; degenerate repeat. 5 LRR repeats span residues 265–290 (LDYF…LRCL), 291–322 (QAPL…RQLK), 323–341 (ELDL…PLSV), 347–374 (EATL…ALSR), and 375–399 (CSQL…LLRH).

This sequence belongs to the PRAME family.

The polypeptide is PRAME family member 12 (Homo sapiens (Human)).